Here is a 197-residue protein sequence, read N- to C-terminus: Probable inosine/xanthosine triphosphatase (197 aa).

Position 9 to 14 (9 to 14 (TSNPIK)) interacts with substrate. Residues aspartate 36 and aspartate 65 each contribute to the Mg(2+) site.

Belongs to the YjjX NTPase family. Homodimer. It depends on Mg(2+) as a cofactor. Requires Mn(2+) as cofactor.

The catalysed reaction is XTP + H2O = XDP + phosphate + H(+). The enzyme catalyses ITP + H2O = IDP + phosphate + H(+). Its function is as follows. Phosphatase that hydrolyzes non-canonical purine nucleotides such as XTP and ITP to their respective diphosphate derivatives. Probably excludes non-canonical purines from DNA/RNA precursor pool, thus preventing their incorporation into DNA/RNA and avoiding chromosomal lesions. The polypeptide is Probable inosine/xanthosine triphosphatase (Aeropyrum pernix (strain ATCC 700893 / DSM 11879 / JCM 9820 / NBRC 100138 / K1)).